Here is a 719-residue protein sequence, read N- to C-terminus: DNA ligase (719 aa).

Residues 42–46 (DAAYD), 92–93 (SL), and glutamate 126 contribute to the NAD(+) site. The active-site N6-AMP-lysine intermediate is the lysine 128. Residues arginine 149, glutamate 185, lysine 301, and lysine 325 each coordinate NAD(+). Cysteine 430, cysteine 433, cysteine 448, and cysteine 454 together coordinate Zn(2+). A BRCT domain is found at 640–719 (ATGSPVEGKT…DDWFKLVGED (80 aa)).

It belongs to the NAD-dependent DNA ligase family. LigA subfamily. The cofactor is Mg(2+). Mn(2+) serves as cofactor.

It carries out the reaction NAD(+) + (deoxyribonucleotide)n-3'-hydroxyl + 5'-phospho-(deoxyribonucleotide)m = (deoxyribonucleotide)n+m + AMP + beta-nicotinamide D-nucleotide.. DNA ligase that catalyzes the formation of phosphodiester linkages between 5'-phosphoryl and 3'-hydroxyl groups in double-stranded DNA using NAD as a coenzyme and as the energy source for the reaction. It is essential for DNA replication and repair of damaged DNA. The protein is DNA ligase of Brucella suis biovar 1 (strain 1330).